The primary structure comprises 689 residues: Glycine--tRNA ligase beta subunit (689 aa).

Belongs to the class-II aminoacyl-tRNA synthetase family. As to quaternary structure, tetramer of two alpha and two beta subunits.

The protein resides in the cytoplasm. The enzyme catalyses tRNA(Gly) + glycine + ATP = glycyl-tRNA(Gly) + AMP + diphosphate. The polypeptide is Glycine--tRNA ligase beta subunit (Aeromonas hydrophila subsp. hydrophila (strain ATCC 7966 / DSM 30187 / BCRC 13018 / CCUG 14551 / JCM 1027 / KCTC 2358 / NCIMB 9240 / NCTC 8049)).